The following is a 543-amino-acid chain: Plant intracellular Ras-group-related LRR protein 5 (543 aa).

LRR repeat units lie at residues Leu239 to Leu262, Tyr264 to Glu284, Leu285 to Asn307, Thr309 to Leu331, Ala332 to Cys354, Ser356 to Leu377, Glu378 to Leu400, Arg402 to Thr424, Leu426 to Leu448, and Glu449 to Cys470. An LRR 11; degenerate repeat occupies Ser472 to Leu494. A GVYW; degenerate motif is present at residues Gly495–Tyr502.

The protein belongs to the SHOC2 family. In terms of tissue distribution, widely expressed.

Its function is as follows. Leucine-rich repeat protein that likely mediates protein interactions, possibly in the context of signal transduction. The sequence is that of Plant intracellular Ras-group-related LRR protein 5 (IRL5) from Oryza sativa subsp. japonica (Rice).